Reading from the N-terminus, the 195-residue chain is U8 snoRNA-decapping enzyme (195 aa).

Positions 18 to 168 (GWRHACHALL…LENTFIGNAR (151 aa)) constitute a Nudix hydrolase domain. Positions 24, 50, and 57 each coordinate substrate. The Mn(2+) site is built by glycine 59, glutamate 76, glutamate 80, and histidine 99. Residues 61–82 (FVDLRDGSLEDGLNRELGEELG) carry the Nudix box motif. Residues asparagine 166 and glutamine 170 each coordinate substrate. Glutamate 173 serves as a coordination point for Mn(2+).

It belongs to the Nudix hydrolase family. NUDT16 subfamily. As to quaternary structure, homodimer. Mg(2+) is required as a cofactor. It depends on Mn(2+) as a cofactor. Co(2+) serves as cofactor.

It is found in the nucleus. It localises to the nucleolus. The protein resides in the nucleoplasm. The protein localises to the cytoplasm. The catalysed reaction is a 5'-end (N(7)-methyl 5'-triphosphoguanosine)-ribonucleoside in mRNA + H2O = N(7)-methyl-GDP + a 5'-end phospho-ribonucleoside in mRNA + 2 H(+). The enzyme catalyses IDP + H2O = IMP + phosphate + H(+). It carries out the reaction dIDP + H2O = dIMP + phosphate + H(+). It catalyses the reaction a 5'-end NAD(+)-phospho-ribonucleoside in mRNA + H2O = a 5'-end phospho-ribonucleoside in mRNA + NAD(+) + H(+). The catalysed reaction is a 5'-end FAD-phospho-ribonucleoside in mRNA + H2O = a 5'-end phospho-adenosine-phospho-ribonucleoside in mRNA + FMN + 2 H(+). The enzyme catalyses a 5'-end CoA-ribonucleoside in mRNA + H2O = a 5'-end phospho-adenosine-phospho-ribonucleoside in mRNA + (R)-4'-phosphopantetheine + 2 H(+). RNA-binding and decapping enzyme that catalyzes the cleavage of the cap structure of snoRNAs and mRNAs in a metal-dependent manner. Part of the U8 snoRNP complex that is required for the accumulation of mature 5.8S and 28S rRNA. Has diphosphatase activity and removes m7G and/or m227G caps from U8 snoRNA and leaves a 5'monophosphate on the RNA. Also catalyzes the cleavage of the cap structure on mRNAs. Does not hydrolyze cap analog structures like 7-methylguanosine nucleoside triphosphate (m7GpppG). Also hydrolysis m7G- and m227G U3-capped RNAs but with less efficiencies. Has broad substrate specificity with manganese or cobalt as cofactor and can act on various RNA species. Binds to the U8 snoRNA; metal is not required for RNA-binding. May play a role in the regulation of snoRNAs and mRNAs degradation. Also acts as a phosphatase; hydrolyzes the non-canonical purine nucleotides inosine diphosphate (IDP) and deoxyinosine diphosphate (dITP) as well as guanosine diphosphate (GDP), deoxyguanosine diphosphate (dGDP), xanthine diphosphate (XDP), inosine triphosphate (ITP) and deoxyinosine triphosphate (ITP) to their respective monophosphate derivatives and does not distinguish between the deoxy- and ribose forms. The order of activity with different substrates is IDP &gt; dIDP &gt;&gt; GDP = dGDP &gt; XDP = ITP = dITP. Binds strongly to GTP, ITP and XTP. Participates in the hydrolysis of dIDP/IDP and probably excludes non-canonical purines from RNA and DNA precursor pools, thus preventing their incorporation into RNA and DNA and avoiding chromosomal lesions. Exhibits decapping activity towards NAD-capped RNAs and FAD-capped RNAs. Exhibits decapping activity towards dpCoA-capped RNAs in vitro. In Bos taurus (Bovine), this protein is U8 snoRNA-decapping enzyme (NUDT16).